Here is a 497-residue protein sequence, read N- to C-terminus: Cytochrome P450 2D6 (497 aa).

Substrate is bound at residue Asp-301. A heme-binding site is contributed by Cys-443.

The protein belongs to the cytochrome P450 family. Requires heme as cofactor.

The protein localises to the endoplasmic reticulum membrane. It localises to the microsome membrane. The enzyme catalyses (5Z,8Z,11Z,14Z)-eicosatetraenoate + reduced [NADPH--hemoprotein reductase] + O2 = (8R,9S)-epoxy-(5Z,11Z,14Z)-eicosatrienoate + oxidized [NADPH--hemoprotein reductase] + H2O + H(+). It carries out the reaction (5Z,8Z,11Z,14Z)-eicosatetraenoate + reduced [NADPH--hemoprotein reductase] + O2 = (11R,12S)-epoxy-(5Z,8Z,14Z)-eicosatrienoate + oxidized [NADPH--hemoprotein reductase] + H2O + H(+). It catalyses the reaction (5Z,8Z,11Z,14Z)-eicosatetraenoate + reduced [NADPH--hemoprotein reductase] + O2 = (14S,15R)-epoxy-(5Z,8Z,11Z)-eicosatrienoate + oxidized [NADPH--hemoprotein reductase] + H2O + H(+). The catalysed reaction is N-(5Z,8Z,11Z,14Z-eicosatetraenoyl)-ethanolamine + reduced [NADPH--hemoprotein reductase] + O2 = N-(8,9-epoxy-5Z,11Z,14Z-eicosatrienoyl)-ethanolamine + oxidized [NADPH--hemoprotein reductase] + H2O + H(+). The enzyme catalyses N-(5Z,8Z,11Z,14Z-eicosatetraenoyl)-ethanolamine + reduced [NADPH--hemoprotein reductase] + O2 = N-(11,12-epoxy-5Z,8Z,14Z-eicosatrienoyl)-ethanolamine + oxidized [NADPH--hemoprotein reductase] + H2O + H(+). It carries out the reaction N-(5Z,8Z,11Z,14Z-eicosatetraenoyl)-ethanolamine + reduced [NADPH--hemoprotein reductase] + O2 = N-(14,15-epoxy-5Z,8Z,11Z-eicosatrienoyl)-ethanolamine + oxidized [NADPH--hemoprotein reductase] + H2O + H(+). It catalyses the reaction N-(5Z,8Z,11Z,14Z-eicosatetraenoyl)-ethanolamine + reduced [NADPH--hemoprotein reductase] + O2 = N-(20-hydroxy-5Z,8Z,11Z,14Z-eicosatetraenoyl)-ethanolamine + oxidized [NADPH--hemoprotein reductase] + H2O + H(+). The catalysed reaction is (5Z,8Z,11Z,14Z,17Z)-eicosapentaenoate + reduced [NADPH--hemoprotein reductase] + O2 = (17S,18R)-epoxy-(5Z,8Z,11Z,14Z)-eicosatetraenoate + oxidized [NADPH--hemoprotein reductase] + H2O + H(+). The enzyme catalyses (4Z,7Z,10Z,13Z,16Z,19Z)-docosahexaenoate + reduced [NADPH--hemoprotein reductase] + O2 = (19R,20S)-epoxy-(4Z,7Z,10Z,13Z,16Z)-docosapentaenoate + oxidized [NADPH--hemoprotein reductase] + H2O + H(+). It carries out the reaction (4Z,7Z,10Z,13Z,16Z,19Z)-docosahexaenoate + reduced [NADPH--hemoprotein reductase] + O2 = (19S,20R)-epoxy-(4Z,7Z,10Z,13Z,16Z)-docosapentaenoate + oxidized [NADPH--hemoprotein reductase] + H2O + H(+). It catalyses the reaction cholesterol + reduced [NADPH--hemoprotein reductase] + O2 = 25-hydroxycholesterol + oxidized [NADPH--hemoprotein reductase] + H2O + H(+). The catalysed reaction is all-trans-retinol + reduced [NADPH--hemoprotein reductase] + O2 = all-trans-retinal + oxidized [NADPH--hemoprotein reductase] + 2 H2O + H(+). It participates in cofactor metabolism; retinol metabolism. Its pathway is lipid metabolism; fatty acid metabolism. The protein operates within steroid metabolism; cholesterol metabolism. Its function is as follows. A cytochrome P450 monooxygenase involved in the metabolism of fatty acids, steroids and retinoids. Mechanistically, uses molecular oxygen inserting one oxygen atom into a substrate, and reducing the second into a water molecule, with two electrons provided by NADPH via cytochrome P450 reductase (NADPH--hemoprotein reductase). Catalyzes the epoxidation of double bonds of polyunsaturated fatty acids (PUFA). Metabolizes endocannabinoid arachidonoylethanolamide (anandamide) to 20-hydroxyeicosatetraenoic acid ethanolamide (20-HETE-EA) and 8,9-, 11,12-, and 14,15-epoxyeicosatrienoic acid ethanolamides (EpETrE-EAs), potentially modulating endocannabinoid system signaling. Catalyzes the hydroxylation of carbon-hydrogen bonds. Metabolizes cholesterol toward 25-hydroxycholesterol, a physiological regulator of cellular cholesterol homeostasis. Catalyzes the oxidative transformations of all-trans retinol to all-trans retinal, a precursor for the active form all-trans-retinoic acid. Also involved in the oxidative metabolism of drugs such as antiarrhythmics, adrenoceptor antagonists, and tricyclic antidepressants. The sequence is that of Cytochrome P450 2D6 (CYP2D6) from Pan troglodytes (Chimpanzee).